Reading from the N-terminus, the 315-residue chain is MSAATPLIVQQAEAEQLLARIDVLQAMRQLFLDLAAGQALQPAQQLVEFPAGRGDFINYLGVLAQEQVYGVKTSPYIVREQGPLVTAWTLLMSMQTGQPLLLCDAARLTTARTAATTAVAVDALAPAEACRLALIGSGPVAHAHLQYVKGLRDWQGVRVHSPCLDERRLQSLRAIDPRAEAAGSLEEALDEADVILLCTSSARAVIDPRQLKRPALVTSISTNAPRAHEVPAESLAAMDVYCDYRHTTPGSAGEMLIAAEQHGWSPEAIRGDLAELLSAQAPRPEYRRPAFFRSIGLGLEDVALANALYRLRQAG.

This sequence belongs to the ornithine cyclodeaminase/mu-crystallin family.

The catalysed reaction is L-arginine + NAD(+) + H2O = 5-guanidino-2-oxopentanoate + NH4(+) + NADH + H(+). It carries out the reaction L-arginine + NADP(+) + H2O = 5-guanidino-2-oxopentanoate + NH4(+) + NADPH + H(+). Its function is as follows. Involved in the anabolism of D-lysine and D-arginine. Under aerobic conditions, the arginine succinyltransferase (AST) and arginine transaminase (ATA) pathways are 2 major routes for L-arginine utilization as the sole source of carbon and nitrogen. The D-to-L racemization of arginine by DauA and DauB is necessary, before to be channeled into the AST and/or ATA pathways. DauB catalyzes the synthesis of L-arginine from 2-ketoarginine (2-KA) and ammonium. The polypeptide is NAD(P)H-dependent anabolic L-arginine dehydrogenase DauB (Pseudomonas aeruginosa (strain ATCC 15692 / DSM 22644 / CIP 104116 / JCM 14847 / LMG 12228 / 1C / PRS 101 / PAO1)).